A 291-amino-acid polypeptide reads, in one-letter code: Nucleotide-binding protein Lm4b_02443 (291 aa).

ATP is bound at residue 13–20; that stretch reads GMSGAGKT. 63–66 serves as a coordination point for GTP; it reads DLRG.

The protein belongs to the RapZ-like family.

In terms of biological role, displays ATPase and GTPase activities. This is Nucleotide-binding protein Lm4b_02443 from Listeria monocytogenes serotype 4b (strain CLIP80459).